We begin with the raw amino-acid sequence, 195 residues long: Capsid protein (195 aa).

Residues 148–195 (NAPILSTLPETTVVRRRGRSPRRRTPSPRRRRSPSPRRRRSQSRESQC) are disordered. A compositionally biased stretch (basic residues) spans 161–188 (VRRRGRSPRRRTPSPRRRRSPSPRRRRS). Phosphoserine; by host occurs at positions 167, 174, and 182. Residues 167 to 172 (SPRRRT) form a 1; half-length repeat. Residues 167–188 (SPRRRTPSPRRRRSPSPRRRRS) are 3 X 7 AA repeats of S-P-R-R-R-[PR]-S. The short motif at 170–187 (RRTPSPRRRRSPSPRRRR) is the Bipartite nuclear localization signal element. Tandem repeats lie at residues 174 to 180 (SPRRRRS) and 182 to 188 (SPRRRRS). Residues 189–195 (QSRESQC) form an RNA binding region.

This sequence belongs to the orthohepadnavirus core antigen family. As to quaternary structure, homodimerizes, then multimerizes. Interacts with cytosol exposed regions of viral L glycoprotein present in the reticulum-to-Golgi compartment. Interacts with human FLNB. Phosphorylated form interacts with host importin alpha; this interaction depends on the exposure of the NLS, which itself depends upon genome maturation and/or phosphorylation of the capsid protein. Interacts with host NUP153. In terms of processing, phosphorylated by host SRPK1, SRPK2, and maybe protein kinase C or GAPDH. Phosphorylation is critical for pregenomic RNA packaging. Protein kinase C phosphorylation is stimulated by HBx protein and may play a role in transport of the viral genome to the nucleus at the late step during the viral replication cycle.

The protein resides in the virion. It is found in the host cytoplasm. Self assembles to form an icosahedral capsid. Most capsids appear to be large particles with an icosahedral symmetry of T=4 and consist of 240 copies of capsid protein, though a fraction forms smaller T=3 particles consisting of 180 capsid proteins. Entering capsids are transported along microtubules to the nucleus. Phosphorylation of the capsid is thought to induce exposure of nuclear localization signal in the C-terminal portion of the capsid protein that allows binding to the nuclear pore complex via the importin (karyopherin-) alpha and beta. Capsids are imported in intact form through the nuclear pore into the nuclear basket, where it probably binds NUP153. Only capsids that contain the mature viral genome can release the viral DNA and capsid protein into the nucleoplasm. Immature capsids get stuck in the basket. Capsids encapsulate the pre-genomic RNA and the P protein. Pre-genomic RNA is reverse-transcribed into DNA while the capsid is still in the cytoplasm. The capsid can then either be directed to the nucleus, providing more genomes for transcription, or bud through the endoplasmic reticulum to provide new virions. The sequence is that of Capsid protein from Homo sapiens (Human).